The sequence spans 72 residues: SRY-related protein MG43 (72 aa).

Residues 1-69 constitute a DNA-binding region (HMG box); the sequence is VKRPMNAFMV…KHMADYPDYK (69 aa).

Its subcellular location is the nucleus. The sequence is that of SRY-related protein MG43 from Tarentola mauritanica (Common wall gecko).